We begin with the raw amino-acid sequence, 295 residues long: Large ribosomal subunit protein uL15m (295 aa).

The N-terminal 20 residues, 1–20 (MAGTARGCGTSLDLLRSLPR), are a transit peptide targeting the mitochondrion. The tract at residues 21–67 (VSLANLKPSPNSRKRERRPRDRRRGRKCGRGHKGERQRGTRPRLGFE) is disordered. The span at 32 to 51 (SRKRERRPRDRRRGRKCGRG) shows a compositional bias: basic residues.

It belongs to the universal ribosomal protein uL15 family. In terms of assembly, component of the mitochondrial ribosome large subunit (39S) which comprises a 16S rRNA and about 50 distinct proteins.

It is found in the mitochondrion. This Mus musculus (Mouse) protein is Large ribosomal subunit protein uL15m (Mrpl15).